A 747-amino-acid polypeptide reads, in one-letter code: AMP deaminase 1 (747 aa).

A Phosphothreonine modification is found at T81. S85 bears the Phosphoserine mark. Y216 carries the phosphotyrosine modification. Residues H303 and H305 each contribute to the Zn(2+) site. Residues H305 and 374–379 (KFNDKY) contribute to the substrate site. A Phosphoserine modification is found at S441. H572 serves as a coordination point for Zn(2+). Residue E575 coordinates substrate. H594 (proton acceptor) is an active-site residue. Residue D649 participates in Zn(2+) binding. Residue 650-653 (DPMQ) coordinates substrate.

This sequence belongs to the metallo-dependent hydrolases superfamily. Adenosine and AMP deaminases family. As to quaternary structure, homotetramer. Zn(2+) serves as cofactor.

It carries out the reaction AMP + H2O + H(+) = IMP + NH4(+). It participates in purine metabolism; IMP biosynthesis via salvage pathway; IMP from AMP: step 1/1. In terms of biological role, AMP deaminase plays a critical role in energy metabolism. The polypeptide is AMP deaminase 1 (Rattus norvegicus (Rat)).